A 281-amino-acid chain; its full sequence is Bifunctional protein FolD (281 aa).

163–165 is a binding site for NADP(+); that stretch reads GRS.

This sequence belongs to the tetrahydrofolate dehydrogenase/cyclohydrolase family. As to quaternary structure, homodimer.

It catalyses the reaction (6R)-5,10-methylene-5,6,7,8-tetrahydrofolate + NADP(+) = (6R)-5,10-methenyltetrahydrofolate + NADPH. It carries out the reaction (6R)-5,10-methenyltetrahydrofolate + H2O = (6R)-10-formyltetrahydrofolate + H(+). The protein operates within one-carbon metabolism; tetrahydrofolate interconversion. Its function is as follows. Catalyzes the oxidation of 5,10-methylenetetrahydrofolate to 5,10-methenyltetrahydrofolate and then the hydrolysis of 5,10-methenyltetrahydrofolate to 10-formyltetrahydrofolate. The chain is Bifunctional protein FolD from Leuconostoc mesenteroides subsp. mesenteroides (strain ATCC 8293 / DSM 20343 / BCRC 11652 / CCM 1803 / JCM 6124 / NCDO 523 / NBRC 100496 / NCIMB 8023 / NCTC 12954 / NRRL B-1118 / 37Y).